Here is a 353-residue protein sequence, read N- to C-terminus: Dihydroorotate dehydrogenase (quinone) (353 aa).

FMN is bound by residues 66–70 and threonine 90; that span reads AGFDK. Lysine 70 contributes to the substrate binding site. 115 to 119 is a binding site for substrate; it reads NRMGF. Positions 143 and 176 each coordinate FMN. Asparagine 176 lines the substrate pocket. Serine 179 acts as the Nucleophile in catalysis. Asparagine 181 is a binding site for substrate. The FMN site is built by lysine 212 and threonine 240. 241–242 is a substrate binding site; that stretch reads NT. FMN contacts are provided by residues glycine 264, glycine 293, and 314-315; that span reads YT.

The protein belongs to the dihydroorotate dehydrogenase family. Type 2 subfamily. As to quaternary structure, monomer. Requires FMN as cofactor.

It is found in the cell membrane. It catalyses the reaction (S)-dihydroorotate + a quinone = orotate + a quinol. It participates in pyrimidine metabolism; UMP biosynthesis via de novo pathway; orotate from (S)-dihydroorotate (quinone route): step 1/1. Functionally, catalyzes the conversion of dihydroorotate to orotate with quinone as electron acceptor. The chain is Dihydroorotate dehydrogenase (quinone) from Mycolicibacterium gilvum (strain PYR-GCK) (Mycobacterium gilvum (strain PYR-GCK)).